The chain runs to 659 residues: mRNA export factor ICP27 homolog (659 aa).

Zn(2+) contacts are provided by Cys-130, His-266, Cys-268, and Cys-273. A CHC2-type zinc finger spans residues 130–273 (CMMSNGERPP…CEHACNDNAC (144 aa)). The interval 317-659 (GSFDDSRSAT…GEDGESDMTL (343 aa)) is disordered. The span at 324-336 (SATSGDGSSCSSA) shows a compositional bias: low complexity. Over residues 354–365 (SDQTDTSNNGTV) the composition is skewed to polar residues. Residues 387-397 (SPLDRPNDYHY) show a composition bias toward basic and acidic residues. A compositionally biased stretch (low complexity) spans 413–427 (GSGSSSTEAVSTASA). Residues 483-499 (SPERRSSEERSSSDQRR) show a composition bias toward basic and acidic residues. The segment covering 503 to 513 (LSRSASATSGG) has biased composition (polar residues). The span at 553–575 (SRSNTPPSSPSKPDSAPAASASP) shows a compositional bias: low complexity. Positions 598-610 (ESVRVSERFETGD) are enriched in basic and acidic residues. Composition is skewed to acidic residues over residues 617 to 628 (ETEDESDDEDDQ) and 646 to 659 (SETD…DMTL).

The protein belongs to the HHV-1 ICP27 protein family.

It localises to the virion tegument. Its subcellular location is the virion. The protein localises to the host nucleus. It is found in the host cytoplasm. Functionally, immediate early (EI) protein that plays many roles during productive infection including regulation of viral gene expression and nuclear export of intronless viral RNAs. In Elephantid herpesvirus 1 (isolate Asian elephant/Berlin/Kiba/1998) (EIHV-1), this protein is mRNA export factor ICP27 homolog.